The primary structure comprises 49 residues: Large ribosomal subunit protein bL33 (49 aa).

It belongs to the bacterial ribosomal protein bL33 family.

This is Large ribosomal subunit protein bL33 from Fervidobacterium nodosum (strain ATCC 35602 / DSM 5306 / Rt17-B1).